A 198-amino-acid polypeptide reads, in one-letter code: FMN-dependent NADH:quinone oxidoreductase 6 (198 aa).

Met96–Phe99 is a binding site for FMN.

The protein belongs to the azoreductase type 1 family. In terms of assembly, homodimer. FMN serves as cofactor.

It carries out the reaction 2 a quinone + NADH + H(+) = 2 a 1,4-benzosemiquinone + NAD(+). The catalysed reaction is N,N-dimethyl-1,4-phenylenediamine + anthranilate + 2 NAD(+) = 2-(4-dimethylaminophenyl)diazenylbenzoate + 2 NADH + 2 H(+). Its function is as follows. Quinone reductase that provides resistance to thiol-specific stress caused by electrophilic quinones. In terms of biological role, also exhibits azoreductase activity. Catalyzes the reductive cleavage of the azo bond in aromatic azo compounds to the corresponding amines. This Burkholderia lata (strain ATCC 17760 / DSM 23089 / LMG 22485 / NCIMB 9086 / R18194 / 383) protein is FMN-dependent NADH:quinone oxidoreductase 6.